Here is a 205-residue protein sequence, read N- to C-terminus: N-(5'-phosphoribosyl)anthranilate isomerase (205 aa).

This sequence belongs to the TrpF family.

The enzyme catalyses N-(5-phospho-beta-D-ribosyl)anthranilate = 1-(2-carboxyphenylamino)-1-deoxy-D-ribulose 5-phosphate. The protein operates within amino-acid biosynthesis; L-tryptophan biosynthesis; L-tryptophan from chorismate: step 3/5. This chain is N-(5'-phosphoribosyl)anthranilate isomerase, found in Thiobacillus denitrificans (strain ATCC 25259 / T1).